A 283-amino-acid chain; its full sequence is Pantothenate synthetase (283 aa).

M30 to H37 provides a ligand contact to ATP. The active-site Proton donor is H37. A (R)-pantoate-binding site is contributed by Q61. Position 61 (Q61) interacts with beta-alanine. G147–D150 is a binding site for ATP. Q153 provides a ligand contact to (R)-pantoate. ATP is bound by residues V176 and V184 to R187.

The protein belongs to the pantothenate synthetase family. In terms of assembly, homodimer.

Its subcellular location is the cytoplasm. The catalysed reaction is (R)-pantoate + beta-alanine + ATP = (R)-pantothenate + AMP + diphosphate + H(+). Its pathway is cofactor biosynthesis; (R)-pantothenate biosynthesis; (R)-pantothenate from (R)-pantoate and beta-alanine: step 1/1. In terms of biological role, catalyzes the condensation of pantoate with beta-alanine in an ATP-dependent reaction via a pantoyl-adenylate intermediate. This Chlorobium limicola (strain DSM 245 / NBRC 103803 / 6330) protein is Pantothenate synthetase.